The following is a 339-amino-acid chain: 2-deoxy-scyllo-inosamine dehydrogenase (339 aa).

Residues Cys37, His59, Cys88, Cys91, Cys94, Cys102, and Glu143 each coordinate Zn(2+).

It belongs to the zinc-containing alcohol dehydrogenase family. DOIA dehydrogenase subfamily. Requires Zn(2+) as cofactor.

The enzyme catalyses 2-deoxy-scyllo-inosamine + NADP(+) = 3-amino-2,3-dideoxy-scyllo-inosose + NADPH + H(+). The catalysed reaction is 2-deoxy-scyllo-inosamine + NAD(+) = 3-amino-2,3-dideoxy-scyllo-inosose + NADH + H(+). It participates in metabolic intermediate biosynthesis; 2-deoxystreptamine biosynthesis; 2-deoxystreptamine from D-glucose 6-phosphate: step 3/4. It functions in the pathway antibiotic biosynthesis; tobramycin biosynthesis. In terms of biological role, catalyzes the oxidation of 2-deoxy-scyllo-inosamine (DOIA) with NAD(+) or NADP(+), forming 3-amino-2,3-dideoxy-scyllo-inosose (amino-DOI). This Streptoalloteichus tenebrarius (strain ATCC 17920 / DSM 40477 / JCM 4838 / CBS 697.72 / NBRC 16177 / NCIMB 11028 / NRRL B-12390 / A12253. 1 / ISP 5477) (Streptomyces tenebrarius) protein is 2-deoxy-scyllo-inosamine dehydrogenase (tobE).